We begin with the raw amino-acid sequence, 392 residues long: BURP domain protein RD22 (392 aa).

Residues 1-22 (MAIRLPLICLLGSFMVVAIAAD) form the signal peptide. 4 TXV repeats span residues 56-58 (TNV), 78-80 (TAV), 100-102 (THV), and 125-127 (TDV). The 5 X approximate repeats stretch occupies residues 57 to 164 (NVQVGKGGVN…PFVYNYAAKE (108 aa)). The segment at 61–136 (GKGGVNVNTH…VGVGKGGVTV (76 aa)) is disordered. Positions 94 to 114 (GKPGGGTHVSVGSGKGHGGGV) are enriched in gly residues. Positions 176–392 (FFLEKDLVRG…PETHVVWFSY (217 aa)) constitute a BURP domain.

As to expression, expressed in seed. Highest expression in leaves and guard cells.

Acts to suppress chlorophyll degradation under moisture stress. This chain is BURP domain protein RD22, found in Arabidopsis thaliana (Mouse-ear cress).